The following is a 603-amino-acid chain: Elongation factor 4 (603 aa).

The tr-type G domain occupies 2-184; it reads NHIRNFSIIA…AVVALIPAPK (183 aa). GTP contacts are provided by residues 14-19 and 131-134; these read DHGKST and NKMD.

Belongs to the TRAFAC class translation factor GTPase superfamily. Classic translation factor GTPase family. LepA subfamily.

Its subcellular location is the cell inner membrane. The enzyme catalyses GTP + H2O = GDP + phosphate + H(+). In terms of biological role, required for accurate and efficient protein synthesis under certain stress conditions. May act as a fidelity factor of the translation reaction, by catalyzing a one-codon backward translocation of tRNAs on improperly translocated ribosomes. Back-translocation proceeds from a post-translocation (POST) complex to a pre-translocation (PRE) complex, thus giving elongation factor G a second chance to translocate the tRNAs correctly. Binds to ribosomes in a GTP-dependent manner. This Polaromonas naphthalenivorans (strain CJ2) protein is Elongation factor 4.